The sequence spans 77 residues: Apelin (77 aa).

A signal peptide spans M1–G22. A propeptide spanning residues G23–H41 is cleaved from the precursor. The segment at V43–F77 is disordered. The span at G58 to H71 shows a compositional bias: basic residues.

This sequence belongs to the apelin family. In terms of processing, several active peptides may be produced by proteolytic processing of the peptide precursor. In terms of tissue distribution, expressed in the brain with highest levels in the frontal cortex, thalamus, hypothalamus and midbrain. Secreted by the mammary gland into the colostrum and the milk.

It localises to the secreted. Its subcellular location is the extracellular space. In terms of biological role, peptide hormone that functions as endogenous ligand for the G-protein-coupled apelin receptor (APLNR/APJ), that plays a role in cadiovascular homeostasis. Functions as a balanced agonist activating both G(i) protein pathway and beta-arrestin pathway of APLNR. Downstream G proteins activation, apelin can inhibit cAMP production and activate key intracellular effectors such as ERKs. On the other hand, APLNR activation induces beta-arrestin recruitment to the membrane leading to desensitization and internalization of the receptor. Apelin blunts cardiac hypertrophic induction from APLNR on response to pathological stimuli, but also induces myocardial hypertrophy under normal conditions. Apelin-36 dissociates more hardly than (pyroglu)apelin-13 from APLNR. Involved in the regulation of cardiac precursor cell movements during gastrulation and heart morphogenesis. Has an inhibitory effect on cytokine production in response to T-cell receptor/CD3 cross-linking; the oral intake of apelin in the colostrum and the milk might therefore modulate immune responses in neonates. Plays a role in early coronary blood vessels formation. Mediates myocardial contractility in an ERK1/2-dependent manner. May also have a role in the central control of body fluid homeostasis by influencing vasopressin release and drinking behavior. (Microbial infection) Endogenous ligand for the apelin receptor (APLNR), an alternative coreceptor with CD4 for HIV-1 infection. Inhibits HIV-1 entry in cells coexpressing CD4 and APLNR. Apelin-36 has a greater inhibitory activity on HIV infection than other synthetic apelin derivatives. This chain is Apelin, found in Homo sapiens (Human).